The following is a 225-amino-acid chain: Small ribosomal subunit protein uS3 (225 aa).

The 69-residue stretch at 38–106 (IRKFIQSRFS…PVNLNIIEVK (69 aa)) folds into the KH type-2 domain.

Belongs to the universal ribosomal protein uS3 family. Part of the 30S ribosomal subunit. Forms a tight complex with proteins S10 and S14.

Binds the lower part of the 30S subunit head. Binds mRNA in the 70S ribosome, positioning it for translation. In Leptospira borgpetersenii serovar Hardjo-bovis (strain JB197), this protein is Small ribosomal subunit protein uS3.